We begin with the raw amino-acid sequence, 265 residues long: RNA polymerase sigma factor SigI2 (265 aa).

The Polymerase core binding motif lies at aspartate 71–isoleucine 84. The H-T-H motif DNA-binding region spans lysine 211–threonine 230.

This sequence belongs to the sigma-70 factor family. SigI subfamily. As to quaternary structure, interacts with RsgI2.

The protein localises to the cytoplasm. Its activity is regulated as follows. Negatively regulated by the anti-sigma-I factor RsgI2. Binding of the polysaccharide substrate to RsgI2 may lead to the release and activation of SigI2. In terms of biological role, sigma factors are initiation factors that promote the attachment of RNA polymerase to specific initiation sites and are then released. This sigma factor is involved in regulation of cellulosomal genes via an external polysaccharide-sensing mechanism. This Acetivibrio thermocellus (strain ATCC 27405 / DSM 1237 / JCM 9322 / NBRC 103400 / NCIMB 10682 / NRRL B-4536 / VPI 7372) (Clostridium thermocellum) protein is RNA polymerase sigma factor SigI2.